Reading from the N-terminus, the 299-residue chain is dTDP-4-dehydrorhamnose reductase (299 aa).

NADH is bound by residues 10–12 (GQV), D30, 39–40 (DF), and 63–65 (AHT). NADPH is bound at residue 11–12 (QV). Residues 39–40 (DF), 63–65 (AHT), and Y102 contribute to the NADPH site. 104–105 (TD) is a dTDP-beta-L-rhamnose binding site. Positions 128 and 132 each coordinate NADH. NADPH is bound by residues Y128 and K132. Y128 acts as the Proton donor/acceptor in catalysis. Residue W153 participates in dTDP-beta-L-rhamnose binding.

Belongs to the dTDP-4-dehydrorhamnose reductase family. Homodimer. The cofactor is Mg(2+).

The catalysed reaction is dTDP-beta-L-rhamnose + NADP(+) = dTDP-4-dehydro-beta-L-rhamnose + NADPH + H(+). It participates in carbohydrate biosynthesis; dTDP-L-rhamnose biosynthesis. It functions in the pathway bacterial outer membrane biogenesis; LPS O-antigen biosynthesis. Functionally, involved in the biosynthesis of the dTDP-L-rhamnose which is an important component of lipopolysaccharide (LPS). Catalyzes the reduction of dTDP-6-deoxy-L-lyxo-4-hexulose to yield dTDP-L-rhamnose. RmlD uses NADH and NADPH nearly equally well. This chain is dTDP-4-dehydrorhamnose reductase (rfbD), found in Salmonella typhimurium (strain LT2 / SGSC1412 / ATCC 700720).